The chain runs to 368 residues: Probable endopolygalacturonase I (368 aa).

A signal peptide spans 1–18 (MHSFQLLGLAALGSLVAA). The propeptide occupies 19 to 31 (APSPSRVSDLTER). Cysteine 35 and cysteine 50 are joined by a disulfide. PbH1 repeat units lie at residues 162–192 (ANNL…DISE), 193–214 (SNGV…AINS), 215–235 (GKNI…SIGS), 244–265 (VQGV…RIKT), 273–295 (VSDV…VIQQ), and 307–328 (SNGI…DSKA). Catalysis depends on aspartate 207, which acts as the Proton donor. A disulfide bridge connects residues cysteine 209 and cysteine 225. Histidine 229 is an active-site residue. 2 disulfide bridges follow: cysteine 335-cysteine 340 and cysteine 359-cysteine 368.

Belongs to the glycosyl hydrolase 28 family.

The protein localises to the secreted. It carries out the reaction (1,4-alpha-D-galacturonosyl)n+m + H2O = (1,4-alpha-D-galacturonosyl)n + (1,4-alpha-D-galacturonosyl)m.. Functionally, involved in maceration and soft-rotting of plant tissue. Hydrolyzes the 1,4-alpha glycosidic bonds of de-esterified pectate in the smooth region of the plant cell wall. The chain is Probable endopolygalacturonase I (pgaI) from Aspergillus terreus (strain NIH 2624 / FGSC A1156).